Here is a 354-residue protein sequence, read N- to C-terminus: Kelch domain-containing protein 8B (354 aa).

Kelch repeat units follow at residues 1-31, 32-79, 81-127, 128-175, 176-222, 224-281, 282-329, and 331-354; these read MSAG…HQDE, HLLV…VLGK, VLVV…ERDG, MVYA…LHGN, KIYV…MAEG, VFSL…SLGG, HIVA…QAGP, and LFVI…RDGV.

It is found in the cytoplasm. The protein localises to the midbody. Its function is as follows. Involved in pinching off the separated nuclei at the cleavage furrow and in cytokinesis. Required for mitotic integrity and maintenance of chromosomal stability. Protects cells against mitotic errors, centrosomal amplification, micronucleus formation and aneuploidy. Plays a key role of midbody function involving abscission of the daughter cells during cytokinesis and appropriate chromosomal and nuclear segregation into the daughter cells. In Pongo abelii (Sumatran orangutan), this protein is Kelch domain-containing protein 8B (KLHDC8B).